A 117-amino-acid polypeptide reads, in one-letter code: B-enzyme (117 aa).

Asp-89 is a catalytic residue.

The catalysed reaction is Hydrolysis of (1-&gt;4)-beta-linkages between N-acetylmuramic acid and N-acetyl-D-glucosamine residues in a peptidoglycan and between N-acetyl-D-glucosamine residues in chitodextrins.. This is B-enzyme (lyzB) from Bacillus subtilis.